Consider the following 87-residue polypeptide: Phosphoribosyl-ATP pyrophosphatase (87 aa).

The protein belongs to the PRA-PH family.

The protein localises to the cytoplasm. It catalyses the reaction 1-(5-phospho-beta-D-ribosyl)-ATP + H2O = 1-(5-phospho-beta-D-ribosyl)-5'-AMP + diphosphate + H(+). Its pathway is amino-acid biosynthesis; L-histidine biosynthesis; L-histidine from 5-phospho-alpha-D-ribose 1-diphosphate: step 2/9. This is Phosphoribosyl-ATP pyrophosphatase from Leifsonia xyli subsp. xyli (strain CTCB07).